A 154-amino-acid polypeptide reads, in one-letter code: 6,7-dimethyl-8-ribityllumazine synthase (154 aa).

5-amino-6-(D-ribitylamino)uracil contacts are provided by residues Phe22, Ala56 to Glu58, and Ala80 to Ile82. Residue Ala85–Thr86 coordinates (2S)-2-hydroxy-3-oxobutyl phosphate. The active-site Proton donor is His88. Phe113 contacts 5-amino-6-(D-ribitylamino)uracil. Arg127 serves as a coordination point for (2S)-2-hydroxy-3-oxobutyl phosphate.

Belongs to the DMRL synthase family. In terms of assembly, forms an icosahedral capsid composed of 60 subunits, arranged as a dodecamer of pentamers.

It catalyses the reaction (2S)-2-hydroxy-3-oxobutyl phosphate + 5-amino-6-(D-ribitylamino)uracil = 6,7-dimethyl-8-(1-D-ribityl)lumazine + phosphate + 2 H2O + H(+). The protein operates within cofactor biosynthesis; riboflavin biosynthesis; riboflavin from 2-hydroxy-3-oxobutyl phosphate and 5-amino-6-(D-ribitylamino)uracil: step 1/2. Functionally, catalyzes the formation of 6,7-dimethyl-8-ribityllumazine by condensation of 5-amino-6-(D-ribitylamino)uracil with 3,4-dihydroxy-2-butanone 4-phosphate. This is the penultimate step in the biosynthesis of riboflavin. The polypeptide is 6,7-dimethyl-8-ribityllumazine synthase (Geobacillus sp. (strain WCH70)).